The following is a 111-amino-acid chain: Nucleoid-associated protein CT0805 (111 aa).

This sequence belongs to the YbaB/EbfC family. As to quaternary structure, homodimer.

The protein resides in the cytoplasm. It localises to the nucleoid. Its function is as follows. Binds to DNA and alters its conformation. May be involved in regulation of gene expression, nucleoid organization and DNA protection. This is Nucleoid-associated protein CT0805 from Chlorobaculum tepidum (strain ATCC 49652 / DSM 12025 / NBRC 103806 / TLS) (Chlorobium tepidum).